Here is a 367-residue protein sequence, read N- to C-terminus: Sigma54-dependent transcriptional regulator SfnR (367 aa).

Positions 21–250 (QVFEDPKSQA…LENVIHHTLL (230 aa)) constitute a Sigma-54 factor interaction domain. Residues 49–56 (GETGTGKE) and 112–121 (ADGGTLFLDE) contribute to the ATP site.

Functionally, involved in the dimethyl sulfide degradation pathway. Activates the expression of sfnG and sfnF. The sequence is that of Sigma54-dependent transcriptional regulator SfnR from Pseudomonas fluorescens (strain Pf0-1).